A 454-amino-acid polypeptide reads, in one-letter code: Bifunctional protein GlmU (454 aa).

Residues 1–228 (MNKCAIILAA…FEETLGVNSR (228 aa)) are pyrophosphorylase. Residues 8 to 11 (LAAG), lysine 22, glutamine 73, and 78 to 79 (GT) each bind UDP-N-acetyl-alpha-D-glucosamine. Mg(2+) is bound at residue aspartate 103. Positions 140, 154, 169, and 226 each coordinate UDP-N-acetyl-alpha-D-glucosamine. Asparagine 226 is a binding site for Mg(2+). A linker region spans residues 229-249 (AELAKVESIMRNRINRTHLDN). An N-acetyltransferase region spans residues 250-454 (GVTIIDPLNT…EGWVERKKLK (205 aa)). The UDP-N-acetyl-alpha-D-glucosamine site is built by arginine 331 and lysine 349. Residue histidine 361 is the Proton acceptor of the active site. Residues tyrosine 364 and asparagine 375 each contribute to the UDP-N-acetyl-alpha-D-glucosamine site. Acetyl-CoA-binding positions include 384–385 (NY), alanine 421, and arginine 438.

The protein in the N-terminal section; belongs to the N-acetylglucosamine-1-phosphate uridyltransferase family. This sequence in the C-terminal section; belongs to the transferase hexapeptide repeat family. As to quaternary structure, homotrimer. The cofactor is Mg(2+).

The protein localises to the cytoplasm. It catalyses the reaction alpha-D-glucosamine 1-phosphate + acetyl-CoA = N-acetyl-alpha-D-glucosamine 1-phosphate + CoA + H(+). It carries out the reaction N-acetyl-alpha-D-glucosamine 1-phosphate + UTP + H(+) = UDP-N-acetyl-alpha-D-glucosamine + diphosphate. It functions in the pathway nucleotide-sugar biosynthesis; UDP-N-acetyl-alpha-D-glucosamine biosynthesis; N-acetyl-alpha-D-glucosamine 1-phosphate from alpha-D-glucosamine 6-phosphate (route II): step 2/2. The protein operates within nucleotide-sugar biosynthesis; UDP-N-acetyl-alpha-D-glucosamine biosynthesis; UDP-N-acetyl-alpha-D-glucosamine from N-acetyl-alpha-D-glucosamine 1-phosphate: step 1/1. Its pathway is bacterial outer membrane biogenesis; LPS lipid A biosynthesis. Functionally, catalyzes the last two sequential reactions in the de novo biosynthetic pathway for UDP-N-acetylglucosamine (UDP-GlcNAc). The C-terminal domain catalyzes the transfer of acetyl group from acetyl coenzyme A to glucosamine-1-phosphate (GlcN-1-P) to produce N-acetylglucosamine-1-phosphate (GlcNAc-1-P), which is converted into UDP-GlcNAc by the transfer of uridine 5-monophosphate (from uridine 5-triphosphate), a reaction catalyzed by the N-terminal domain. This chain is Bifunctional protein GlmU, found in Clostridium perfringens (strain ATCC 13124 / DSM 756 / JCM 1290 / NCIMB 6125 / NCTC 8237 / Type A).